The chain runs to 976 residues: Protein phosphatase 1 regulatory subunit 12B (976 aa).

Basic and acidic residues predominate over residues M1–R24. Residues M1 to P52 form a disordered region. S29 carries the post-translational modification Phosphoserine. 5 ANK repeats span residues E57–T86, D90–Q119, E123–I152, S216–V245, and D249–I278. A disordered region spans residues E342 to N489. The span at S362 to S374 shows a compositional bias: acidic residues. Positions E375–E385 are enriched in basic and acidic residues. The segment covering F411 to F423 has biased composition (low complexity). Position 444 is a phosphothreonine (T444). Over residues S465 to S477 the composition is skewed to low complexity. Residues L480–N489 show a composition bias toward basic and acidic residues. The residue at position 502 (S502) is a Phosphoserine. Residues S503–N873 form a disordered region. The segment covering E538–S564 has biased composition (polar residues). The segment covering V622–R631 has biased composition (basic and acidic residues). A compositionally biased stretch (basic residues) spans K632–R642. T645 bears the Phosphothreonine mark. Residues E655–D679 show a composition bias toward basic and acidic residues. 2 stretches are compositionally biased toward polar residues: residues D722 to T739 and S747 to A763. Residues A765–A777 are compositionally biased toward basic and acidic residues. The span at E791 to G801 shows a compositional bias: basic residues. T802 is subject to Phosphothreonine. Residues E818 to R830 show a composition bias toward basic and acidic residues. Phosphoserine is present on S833. Basic and acidic residues predominate over residues Y844–R860. Position 941 is a phosphoserine (S941).

As to quaternary structure, PP1 comprises a catalytic subunit, PPP1CA, PPP1CB or PPP1CC, and one or several targeting or regulatory subunits. PPP1R12B mediates binding to myosin. Isoform 3 and isoform 4 bind PPP1R12A, but not isoform 1 of PPP1R12B itself. Binds IL16.

It localises to the cytoplasm. It is found in the cytoskeleton. The protein resides in the stress fiber. Regulates myosin phosphatase activity. Augments Ca(2+) sensitivity of the contractile apparatus. This is Protein phosphatase 1 regulatory subunit 12B (Ppp1r12b) from Mus musculus (Mouse).